The chain runs to 735 residues: Wall-associated receptor kinase 1 (735 aa).

Residues 1–24 (MKVQEGLFLVAIFFSLACTQLVKG) form the signal peptide. At 25-331 (QHQPGENCQN…TTTMSCKRKE (307 aa)) the chain is on the extracellular side. N-linked (GlcNAc...) asparagine glycosylation is found at Asn-38, Asn-56, Asn-80, Asn-90, Asn-113, Asn-140, Asn-209, Asn-235, and Asn-250. Positions 67–254 (RPHVLSDIEV…SICGGNSTCL (188 aa)) are polygalacturonic acid-binding. One can recognise an EGF-like 1 domain in the interval 234-281 (GNQTCEQVGSTSICGGNSTCLDSTPRNGYICRCNEGFDGNPYLSAGCQ). 6 disulfides stabilise this stretch: Cys-238–Cys-253, Cys-247–Cys-264, Cys-266–Cys-280, Cys-286–Cys-303, Cys-297–Cys-312, and Cys-314–Cys-327. Positions 282 to 328 (DVNECTTSSTIHRHNCSDPKTCRNKVGGFYCKCQSGYRLDTTTMSCK) constitute an EGF-like 2; calcium-binding domain. Residue Asn-296 is glycosylated (N-linked (GlcNAc...) asparagine). A helical transmembrane segment spans residues 332 to 352 (FAWTTILLVTTIGFLVILLGV). Over 353 to 735 (ACIQQRMKHL…VAILDIETGR (383 aa)) the chain is Cytoplasmic. Thr-398 carries the phosphothreonine modification. Residues 409–692 (YAESRILGQG…RVEKTKHKWS (284 aa)) form the Protein kinase domain. ATP is bound by residues 415 to 423 (LGQGGQGTV) and Lys-437. Residue Tyr-482 is modified to Phosphotyrosine. The active-site Proton acceptor is Asp-534. A phosphothreonine mark is found at Thr-568 and Thr-573. Tyr-581 carries the phosphotyrosine modification.

Belongs to the protein kinase superfamily. Ser/Thr protein kinase family. As to quaternary structure, interacts with the glycine-rich proteins GRP3 and GRP3S, and the type 2C protein phosphatase KAPP. Component of a 500 kDa complex, composed of WAK1, GRP3 and KAPP. Interacts with the oxygen-evolving enhancer protein 2 (OEE2). Predominantly expressed in green tissues such as stems and leaves. Detected at organ junctions.

It localises to the membrane. The enzyme catalyses L-seryl-[protein] + ATP = O-phospho-L-seryl-[protein] + ADP + H(+). The catalysed reaction is L-threonyl-[protein] + ATP = O-phospho-L-threonyl-[protein] + ADP + H(+). Functionally, serine/threonine-protein kinase that may function as a signaling receptor of extracellular matrix component. Binding to pectin may have significance in the control of cell expansion, morphogenesis and development. Required during plant's response to pathogen infection and in plant defense against heavy metal toxicity. Phosphorylates the oxygen-evolving enhancer protein 2 (OEE2) in an GRP-3-dependent manner. This is Wall-associated receptor kinase 1 (WAK1) from Arabidopsis thaliana (Mouse-ear cress).